The chain runs to 434 residues: Eukaryotic translation initiation factor 3 subunit E (434 aa).

The 174-residue stretch at 219-392 (FFNHPKGRDL…GHVVMGTQPL (174 aa)) folds into the PCI domain.

Belongs to the eIF-3 subunit E family. Component of the eukaryotic translation initiation factor 3 (eIF-3) complex. The eIF-3 complex interacts with pix. Interacts with mxt.

The protein localises to the cytoplasm. Its function is as follows. Component of the eukaryotic translation initiation factor 3 (eIF-3) complex, which is involved in protein synthesis of a specialized repertoire of mRNAs and, together with other initiation factors, stimulates binding of mRNA and methionyl-tRNAi to the 40S ribosome. The eIF-3 complex specifically targets and initiates translation of a subset of mRNAs involved in cell proliferation. The protein is Eukaryotic translation initiation factor 3 subunit E (eIF3-S6) of Drosophila pseudoobscura pseudoobscura (Fruit fly).